The following is a 284-amino-acid chain: ATP phosphoribosyltransferase (284 aa).

It belongs to the ATP phosphoribosyltransferase family. Long subfamily. As to quaternary structure, equilibrium between an active dimeric form, an inactive hexameric form and higher aggregates. Interconversion between the various forms is largely reversible and is influenced by the natural substrates and inhibitors of the enzyme. It depends on Mg(2+) as a cofactor.

The protein localises to the cytoplasm. The catalysed reaction is 1-(5-phospho-beta-D-ribosyl)-ATP + diphosphate = 5-phospho-alpha-D-ribose 1-diphosphate + ATP. Its pathway is amino-acid biosynthesis; L-histidine biosynthesis; L-histidine from 5-phospho-alpha-D-ribose 1-diphosphate: step 1/9. Its activity is regulated as follows. Feedback inhibited by histidine. In terms of biological role, catalyzes the condensation of ATP and 5-phosphoribose 1-diphosphate to form N'-(5'-phosphoribosyl)-ATP (PR-ATP). Has a crucial role in the pathway because the rate of histidine biosynthesis seems to be controlled primarily by regulation of HisG enzymatic activity. The protein is ATP phosphoribosyltransferase (hisG) of Mycobacterium bovis (strain ATCC BAA-935 / AF2122/97).